A 359-amino-acid polypeptide reads, in one-letter code: Nicotinate-nucleotide--dimethylbenzimidazole phosphoribosyltransferase (359 aa).

Glutamate 318 functions as the Proton acceptor in the catalytic mechanism.

The protein belongs to the CobT family. Homodimer.

It catalyses the reaction 5,6-dimethylbenzimidazole + nicotinate beta-D-ribonucleotide = alpha-ribazole 5'-phosphate + nicotinate + H(+). It participates in nucleoside biosynthesis; alpha-ribazole biosynthesis; alpha-ribazole from 5,6-dimethylbenzimidazole: step 1/2. Functionally, catalyzes the synthesis of alpha-ribazole-5'-phosphate from nicotinate mononucleotide (NAMN) and 5,6-dimethylbenzimidazole (DMB). The polypeptide is Nicotinate-nucleotide--dimethylbenzimidazole phosphoribosyltransferase (Escherichia coli O157:H7).